The primary structure comprises 272 residues: NADPH-dependent 7-cyano-7-deazaguanine reductase (272 aa).

80–82 (VES) serves as a coordination point for substrate. 82 to 83 (SK) provides a ligand contact to NADPH. Cys178 (thioimide intermediate) is an active-site residue. The Proton donor role is filled by Asp185. 217 to 218 (AE) contacts substrate. 246–247 (RG) provides a ligand contact to NADPH.

It belongs to the GTP cyclohydrolase I family. QueF type 2 subfamily. Homodimer.

It is found in the cytoplasm. It catalyses the reaction 7-aminomethyl-7-carbaguanine + 2 NADP(+) = 7-cyano-7-deazaguanine + 2 NADPH + 3 H(+). The protein operates within tRNA modification; tRNA-queuosine biosynthesis. Its function is as follows. Catalyzes the NADPH-dependent reduction of 7-cyano-7-deazaguanine (preQ0) to 7-aminomethyl-7-deazaguanine (preQ1). The polypeptide is NADPH-dependent 7-cyano-7-deazaguanine reductase (Rickettsia typhi (strain ATCC VR-144 / Wilmington)).